The primary structure comprises 152 residues: UPF0178 protein YE1167 (152 aa).

The protein belongs to the UPF0178 family.

The chain is UPF0178 protein YE1167 from Yersinia enterocolitica serotype O:8 / biotype 1B (strain NCTC 13174 / 8081).